The primary structure comprises 297 residues: MSEEAWARSAGGRAILAESPRPVPSRQRSNGVVRLRVARAGIAADGPTRIVDLAEGGPLRLRFPRQGAERMLEGVLVNTGGGVACGDVFEVSVMVEAGAACLLTTTAAEKIYRSDGANATILNRIEVGPAGRLDWLPQETILFDRARLVRRFEADLAPDASLLVAEIAVLGRAARGERLEQALFEDRWRIRRGGRLVYADSLRLDGAVSDLMARAATGGGARALATLLDLAPGAEARLDEARTLLDALPAGVEAGASAWNGHLAVRMLAPAIAPLREAAARFLAVWRDRPMPRVWQS.

Belongs to the UreD family. UreD, UreF and UreG form a complex that acts as a GTP-hydrolysis-dependent molecular chaperone, activating the urease apoprotein by helping to assemble the nickel containing metallocenter of UreC. The UreE protein probably delivers the nickel.

It is found in the cytoplasm. Its function is as follows. Required for maturation of urease via the functional incorporation of the urease nickel metallocenter. This is Urease accessory protein UreD 2 from Methylorubrum populi (strain ATCC BAA-705 / NCIMB 13946 / BJ001) (Methylobacterium populi).